Reading from the N-terminus, the 664-residue chain is Glycine--tRNA ligase beta subunit (664 aa).

This sequence belongs to the class-II aminoacyl-tRNA synthetase family. Tetramer of two alpha and two beta subunits.

The protein localises to the cytoplasm. It carries out the reaction tRNA(Gly) + glycine + ATP = glycyl-tRNA(Gly) + AMP + diphosphate. The polypeptide is Glycine--tRNA ligase beta subunit (Rickettsia conorii (strain ATCC VR-613 / Malish 7)).